The sequence spans 819 residues: DNA mismatch repair protein MutS (819 aa).

Residue 596 to 603 (GPNMSGKS) participates in ATP binding.

Belongs to the DNA mismatch repair MutS family.

Its function is as follows. This protein is involved in the repair of mismatches in DNA. It is possible that it carries out the mismatch recognition step. This protein has a weak ATPase activity. This chain is DNA mismatch repair protein MutS, found in Thermosipho melanesiensis (strain DSM 12029 / CIP 104789 / BI429).